An 80-amino-acid polypeptide reads, in one-letter code: SPI-1 type 3 secretion system needle filament protein (80 aa).

The protein belongs to the SctF family. As to quaternary structure, the core secretion machinery of the T3SS is composed of approximately 20 different proteins, including cytoplasmic components, a base, an export apparatus and a needle. This subunit polymerizes and forms the helical needle filament. Interacts with the needle tip protein SipD/SctA. Interacts with the needle adapter protein PrgJ/SctI, the secretin InvG/SctC and the minor export apparatus protein SpaP/SctR. In vitro, the needle protomer refolds spontaneously to extend the needle from the distal end.

The protein resides in the secreted. It is found in the cell surface. Binding of bile salts, including deoxycholate, to the PrgI:SipD interface may inhibit the T3SS function. Functionally, component of the type III secretion system (T3SS), also called injectisome, which is used to inject bacterial effector proteins into eukaryotic host cells. PrgI/SctF1 forms the external needle filament that protrudes from the bacterial surface. Is probably involved in the transduction of an activating signal, thought to be mediated by the distal tip of the needle filament, to the secretion machine. Required for invasion of epithelial cells. Required for the secretion of the effector protein SptP. Its function is as follows. During infection, can induce innate immune responses. The needle proteins interact with host TLR2 or TLR4, and induce signaling by NF-kappa-B and/or AP-1. This activation is MyD88 dependent and results in increased expression of cytokines, including TNF-alpha, IL-6 and IL-8. The chain is SPI-1 type 3 secretion system needle filament protein from Salmonella typhimurium (strain LT2 / SGSC1412 / ATCC 700720).